A 104-amino-acid polypeptide reads, in one-letter code: Thioredoxin (104 aa).

One can recognise a Thioredoxin domain in the interval 2–104; the sequence is AIVKVTDADF…NLAEVLDKHL (103 aa). A disulfide bridge connects residues Cys-29 and Cys-32.

Belongs to the thioredoxin family.

Component of the thioredoxin-thioredoxin reductase system. Participates in various redox reactions through the reversible oxidation of its active center dithiol to a disulfide and catalyzes dithiol-disulfide exchange reactions. The protein is Thioredoxin (trxA) of Staphylococcus aureus (strain N315).